Here is a 388-residue protein sequence, read N- to C-terminus: T-cell surface glycoprotein CD1e, membrane-associated (388 aa).

The first 19 residues, 1 to 19 (MLLLFLLFEGLCCPGENTA), serve as a signal peptide directing secretion. Residues 20–31 (APQALQSYHLAA) constitute a propeptide, removed in sCD1e. 2 N-linked (GlcNAc...) asparagine glycosylation sites follow: Asn-47 and Asn-84. The Ig-like domain occupies 191–301 (PRFLAGLMEA…LGGHDLIIHW (111 aa)). A disulfide bridge links Cys-230 with Cys-285. The helical transmembrane segment at 305–325 (SIFLILICLTVIVTLVILVVV) threads the bilayer.

In terms of assembly, heterodimer with B2M (beta-2-microglobulin). The association with B2M appears to be facilitated by the presence of the propeptide. Post-translationally, mono-ubiquitinated. Proteolytically cleaved in late endosomes to yield a soluble form. As to expression, expressed on cortical thymocytes, dendritic cells, Langerhans cells, on certain T-cell leukemias, and in various other tissues.

It is found in the golgi apparatus membrane. It localises to the early endosome. The protein localises to the late endosome. Its subcellular location is the lysosome lumen. In terms of biological role, T-cell surface glycoprotein CD1e, soluble binds diacetylated lipids, including phosphatidyl inositides and diacylated sulfoglycolipids, and is required for the presentation of glycolipid antigens on the cell surface. The membrane-associated form is not active. This is T-cell surface glycoprotein CD1e, membrane-associated (CD1E) from Homo sapiens (Human).